Here is a 238-residue protein sequence, read N- to C-terminus: SPEG neighbor protein (238 aa).

The IQ domain occupies 29–55; the sequence is QSAAIRIQASYRGHRSRKELREKGPPR. 2 Ig-like domains span residues 54 to 143 and 147 to 236; these read PRVL…ARIL and PTKI…ARVD.

The protein is SPEG neighbor protein of Homo sapiens (Human).